The following is a 131-amino-acid chain: Protein GLUTAMINE DUMPER 5 (131 aa).

Topologically, residues 1–34 (MRQFPSIRGNINEKMMTTMVESQTRSPWRTPVPY) are extracellular. Residues 35–55 (LFGGLAAMLGLIAFALLLLAC) traverse the membrane as a helical segment. At 56 to 131 (SYWRLSRQTE…GESKVTEENH (76 aa)) the chain is on the cytoplasmic side. The VIMAG signature appears at 88-92 (VIMAG).

This sequence belongs to the GLUTAMINE DUMPER 1 (TC 9.B.60) family. Expressed in the vascular tissues. Also detected in guard cells.

Its subcellular location is the membrane. Probable subunit of an amino acid transporter involved in the regulation of the amino acid metabolism. Stimulates amino acid export by activating nonselective amino acid facilitators. The protein is Protein GLUTAMINE DUMPER 5 (GDU5) of Arabidopsis thaliana (Mouse-ear cress).